The sequence spans 238 residues: MPYQIENRPPDLRERMYFPEIIRGIGAVTKHFLRNLFFTRDKNPDILERRRGEFGWADNVTLQYPEERAPYPPGYRGLHRLVPREDGRARCVACYMCATACPAQCIYIEAGEYADDPIEKYPVKFVIDELRCIVCGFCVEACPKDAIRMDSGEHTPPSYERGAQIWDEKRLLRGPPVSYQYDPWLRRGSPSIPAEKLEEMRARARPFSTVATDEYAQTPGFSVRALAQEAKDRAERAK.

4Fe-4S ferredoxin-type domains are found at residues 81–111 and 123–152; these read LVPR…IEAG and VKFV…MDSG. 8 residues coordinate [4Fe-4S] cluster: C91, C94, C97, C101, C132, C135, C138, and C142.

It belongs to the complex I 23 kDa subunit family. In terms of assembly, NDH-1 is composed of 14 different subunits. Subunits NuoA, H, J, K, L, M, N constitute the membrane sector of the complex. [4Fe-4S] cluster is required as a cofactor.

It is found in the cell inner membrane. It carries out the reaction a quinone + NADH + 5 H(+)(in) = a quinol + NAD(+) + 4 H(+)(out). In terms of biological role, NDH-1 shuttles electrons from NADH, via FMN and iron-sulfur (Fe-S) centers, to quinones in the respiratory chain. The immediate electron acceptor for the enzyme in this species is believed to be ubiquinone. Couples the redox reaction to proton translocation (for every two electrons transferred, four hydrogen ions are translocated across the cytoplasmic membrane), and thus conserves the redox energy in a proton gradient. The protein is NADH-quinone oxidoreductase subunit I of Anaeromyxobacter sp. (strain Fw109-5).